A 115-amino-acid chain; its full sequence is MEKAYRIKKNADFQRIYKKGHSVANRQFVVYTCNNKEIDHFRLGISVSKKLGNAVLRNKIKRAIRENFKVHKSHILAKDIIVIARQPAKDMTTLQIQNSLEHVLKIAKVFNKKIK.

Belongs to the RnpA family. As to quaternary structure, consists of a catalytic RNA component (M1 or rnpB) and a protein subunit.

The enzyme catalyses Endonucleolytic cleavage of RNA, removing 5'-extranucleotides from tRNA precursor.. Its function is as follows. RNaseP catalyzes the removal of the 5'-leader sequence from pre-tRNA to produce the mature 5'-terminus. It can also cleave other RNA substrates such as 4.5S RNA. The protein component plays an auxiliary but essential role in vivo by binding to the 5'-leader sequence and broadening the substrate specificity of the ribozyme. The protein is Ribonuclease P protein component of Staphylococcus aureus (strain Mu3 / ATCC 700698).